The primary structure comprises 236 residues: Small ribosomal subunit protein uS2c (236 aa).

Belongs to the universal ribosomal protein uS2 family.

It is found in the plastid. The protein resides in the chloroplast. This is Small ribosomal subunit protein uS2c (rps2) from Helianthus annuus (Common sunflower).